Here is a 119-residue protein sequence, read N- to C-terminus: NAD(P)H-quinone oxidoreductase subunit M (119 aa).

It belongs to the complex I NdhM subunit family. NDH-1 can be composed of about 15 different subunits; different subcomplexes with different compositions have been identified which probably have different functions.

It localises to the cellular thylakoid membrane. The catalysed reaction is a plastoquinone + NADH + (n+1) H(+)(in) = a plastoquinol + NAD(+) + n H(+)(out). The enzyme catalyses a plastoquinone + NADPH + (n+1) H(+)(in) = a plastoquinol + NADP(+) + n H(+)(out). Its function is as follows. NDH-1 shuttles electrons from an unknown electron donor, via FMN and iron-sulfur (Fe-S) centers, to quinones in the respiratory and/or the photosynthetic chain. The immediate electron acceptor for the enzyme in this species is believed to be plastoquinone. Couples the redox reaction to proton translocation, and thus conserves the redox energy in a proton gradient. Cyanobacterial NDH-1 also plays a role in inorganic carbon-concentration. This Crocosphaera subtropica (strain ATCC 51142 / BH68) (Cyanothece sp. (strain ATCC 51142)) protein is NAD(P)H-quinone oxidoreductase subunit M.